Reading from the N-terminus, the 446-residue chain is Probable 1,4-beta-D-glucan cellobiohydrolase A (446 aa).

Positions 1–17 (MYQRALLFSALLSVSRA) are cleaved as a signal peptide. Asparagine 81 carries an N-linked (GlcNAc...) asparagine glycan. The Nucleophile role is filled by glutamate 226. Glutamate 231 serves as the catalytic Proton donor. Residues asparagine 284 and asparagine 333 are each glycosylated (N-linked (GlcNAc...) asparagine). Residues 399–420 (TDADPSQPGVARGTCEQGAGDP) are disordered.

It belongs to the glycosyl hydrolase 7 (cellulase C) family.

Its subcellular location is the secreted. The catalysed reaction is Hydrolysis of (1-&gt;4)-beta-D-glucosidic linkages in cellulose and cellotetraose, releasing cellobiose from the non-reducing ends of the chains.. Functionally, the biological conversion of cellulose to glucose generally requires three types of hydrolytic enzymes: (1) Endoglucanases which cut internal beta-1,4-glucosidic bonds; (2) Exocellobiohydrolases that cut the disaccharide cellobiose from the non-reducing end of the cellulose polymer chain; (3) Beta-1,4-glucosidases which hydrolyze the cellobiose and other short cello-oligosaccharides to glucose. The sequence is that of Probable 1,4-beta-D-glucan cellobiohydrolase A (cbhA) from Emericella nidulans (strain FGSC A4 / ATCC 38163 / CBS 112.46 / NRRL 194 / M139) (Aspergillus nidulans).